Reading from the N-terminus, the 834-residue chain is MTYSNKPTGSSLRSSRNSTLEPQSLVHREESKRQEGPKGQNLRIGLASPEQIRNWAERILPNGEIVGRVLKPHTIHYQTHKPEKDGLFCERIFGPIKSGFCSCGKYKGTRDNDSPPFCEQCGVELTESRVRRHRMGYIQLSSPVTHVWYLKNRPSVISHLLEMPLKDVESLVYCGSFIIGPGTYSKFRLLGTLRIGTHERAYKRILTRKRLRTRKHFLQTKNISLASRSVTLEKSQEKVNDSLKLSQRIIIARKRLLRLAAKPILEPKLICNRFYVPWRIALELFLSKWYRDCESREIITGGYGIQRMLINLNLQNKLVSLQKNWERLVEQTEKMWFPVSGKYKNSDHSADIQREKRLIIRSSKIIRDLIQSKTQPEWMVLSVLPVLPPDLRPIVELREGQLITSDLNELYRKVLFRNEDLSIWLSYQGTLVLSGLLARLQRASLQRAVDALLANGMGSSTFRDYNKRAYKSFSALIKGKKGRFRENLLGKRVDYSGRSVIVVGPLLALHECGLPREMALELFQPFIIRELITRQLAPNLRAAKSMIQNKEPIIWKVLQVIVQNRLVLLNRAPTLHRLGIQAFQPVLVGERAILLHPLVCAGFNADFDGDQMAVHVPLSWEAQVEARILMWSPSNLLSPATGRAVAVPSQDMLLGLYVLTLEGSVGIYGSRQRSFVSSSLLFTKNHEIKESKEEDSQSKQDFIRSLDKKSKPIKNSKYSLYPKFIENKSSFHKFPIFYDYDDVIISIHQGHLNLFSFLWLRWEAKYPVISSRKGPIEYQFDSSGNSINIYDNSYIKKNRKGNSFSKYILTTAGRVLFNQQIQQSIQEHFSSLRK.

The segment covering 1 to 22 (MTYSNKPTGSSLRSSRNSTLEP) has biased composition (polar residues). Positions 1–45 (MTYSNKPTGSSLRSSRNSTLEPQSLVHREESKRQEGPKGQNLRIG) are disordered. Residues 26–36 (VHREESKRQEG) are compositionally biased toward basic and acidic residues. Zn(2+)-binding residues include cysteine 101, cysteine 103, cysteine 118, and cysteine 121. 3 residues coordinate Mg(2+): aspartate 606, aspartate 608, and aspartate 610.

It belongs to the RNA polymerase beta' chain family. RpoC1 subfamily. In plastids the minimal PEP RNA polymerase catalytic core is composed of four subunits: alpha, beta, beta', and beta''. When a (nuclear-encoded) sigma factor is associated with the core the holoenzyme is formed, which can initiate transcription. Requires Mg(2+) as cofactor. Zn(2+) serves as cofactor.

Its subcellular location is the plastid. The protein localises to the chloroplast. It carries out the reaction RNA(n) + a ribonucleoside 5'-triphosphate = RNA(n+1) + diphosphate. Its function is as follows. DNA-dependent RNA polymerase catalyzes the transcription of DNA into RNA using the four ribonucleoside triphosphates as substrates. The sequence is that of DNA-directed RNA polymerase subunit beta' from Staurastrum punctulatum (Green alga).